The sequence spans 120 residues: Putative defensin-like protein 179 (120 aa).

The N-terminal stretch at 1–27 (MERTSTSLLFLLSLLIIFASAVNQIRA) is a signal peptide. 7 disulfide bridges follow: Cys37/Cys56, Cys40/Cys63, Cys44/Cys65, Cys74/Cys120, Cys85/Cys105, Cys90/Cys114, and Cys94/Cys116.

This sequence belongs to the DEFL family.

It is found in the secreted. This chain is Putative defensin-like protein 179 (LCR57), found in Arabidopsis thaliana (Mouse-ear cress).